The primary structure comprises 467 residues: Thiohydroximate-O-sulfate sulfur/sulfate-lyase (nitrile-forming) NSP3 (467 aa).

Residues 2–143 (AQKLVAQGGE…LHSLGAYVSL (142 aa)) form the Jacalin-type lectin domain. 5 Kelch repeats span residues 177–225 (KIYS…VRMV), 230–276 (TLYT…SMAA), 280–329 (NVYV…VVQG), 331–375 (VWIV…ASAA), and 379–434 (HIVI…ASTT). The Proton donor role is filled by arginine 237. A (Z)-N-(sulfonatooxy)alkanimidothioate is bound by residues arginine 237, serine 270, arginine 292, glycine 321, and valine 370. Arginine 292 (proton donor) is an active-site residue. Glutamate 386, aspartate 390, and histidine 394 together coordinate Fe(2+). An a (Z)-N-(sulfonatooxy)alkanimidothioate-binding site is contributed by tryptophan 429.

This sequence belongs to the jacalin lectin family. Fe(2+) is required as a cofactor. In terms of tissue distribution, mainly expressed in roots, and, at low levels, in seedlings and leaves. Observed in seeds.

It catalyses the reaction a (Z)-N-(sulfonatooxy)alkanimidothioate = a nitrile + sulfur + sulfate. It carries out the reaction (Z)-phenyl-N-(sulfonatooxy)methanimidothioate = phenylacetonitrile + sulfur + sulfate. The catalysed reaction is (Z)-N-(sulfonatooxy)prop-2-enimidothioate = but-3-enenitrile + sulfur + sulfate. Functionally, specifier protein responsible for constitutive and herbivore-induced simple nitrile formation, especially in roots. Promotes simple nitriles, but not epithionitrile or thiocyanate formation. Converts allylglucosinolate and benzylglucosinolate (glucotropaeolin) to their corresponding simple nitriles in the presence of myrosinase. The polypeptide is Thiohydroximate-O-sulfate sulfur/sulfate-lyase (nitrile-forming) NSP3 (Arabidopsis thaliana (Mouse-ear cress)).